Consider the following 338-residue polypeptide: Phosphatidate cytidylyltransferase, mitochondrial (338 aa).

The protein belongs to the TAM41 family. It depends on Mg(2+) as a cofactor.

Its subcellular location is the mitochondrion inner membrane. It catalyses the reaction a 1,2-diacyl-sn-glycero-3-phosphate + CTP + H(+) = a CDP-1,2-diacyl-sn-glycerol + diphosphate. The protein operates within phospholipid metabolism; CDP-diacylglycerol biosynthesis; CDP-diacylglycerol from sn-glycerol 3-phosphate: step 3/3. In terms of biological role, catalyzes the conversion of phosphatidic acid (PA) to CDP-diacylglycerol (CDP-DAG), an essential intermediate in the synthesis of phosphatidylglycerol, cardiolipin and phosphatidylinositol. The protein is Phosphatidate cytidylyltransferase, mitochondrial (tamm41) of Danio rerio (Zebrafish).